A 207-amino-acid chain; its full sequence is Small ribosomal subunit protein uS4 (207 aa).

The S4 RNA-binding domain maps to 98 to 164; it reads RRLDNVVYRM…AKFKNLVEVN (67 aa).

It belongs to the universal ribosomal protein uS4 family. In terms of assembly, part of the 30S ribosomal subunit. Contacts protein S5. The interaction surface between S4 and S5 is involved in control of translational fidelity.

One of the primary rRNA binding proteins, it binds directly to 16S rRNA where it nucleates assembly of the body of the 30S subunit. In terms of biological role, with S5 and S12 plays an important role in translational accuracy. The sequence is that of Small ribosomal subunit protein uS4 from Clostridioides difficile (strain 630) (Peptoclostridium difficile).